A 1090-amino-acid chain; its full sequence is Leucine-rich repeat receptor-like serine/threonine-protein kinase RGI4 (1090 aa).

The first 20 residues, 1–20 (MPRNPRFCFFLFLLFHSSLF), serve as a signal peptide directing secretion. The Extracellular segment spans residues 21–702 (FSIPCFSIDE…IQTRHRSAVK (682 aa)). The LRR 1 repeat unit spans residues 36–59 (LSWKSQLNISGDALSSWKASESNP). A glycan (N-linked (GlcNAc...) asparagine) is linked at N43. C60 and C67 form a disulfide bridge. 4 LRR repeats span residues 95–119 (IKSL…LGDL), 120–143 (SELE…IFKL), 145–166 (KLKI…ELGN), and 168–191 (VNLI…IGEL). N107 carries an N-linked (GlcNAc...) asparagine glycan. 4 short sequence motifs (small peptide recognition) span residues 176–177 (FD), 198–201 (RAGG), 221–226 (TLGLAE), and Y249. LRR repeat units lie at residues 216–240 (CESL…IGNL), 242–264 (KVQT…IGNC), 265–288 (TELQ…MGRL), 289–312 (KKLQ…LGTC), 314–335 (ELFL…SFGN), 336–360 (LPNL…LANC), and 362–386 (KLTH…KLTS). An N-linked (GlcNAc...) asparagine glycan is attached at N263. The CLE45 peptide binding motif lies at 269-273 (NLYLY). The short motif at 271–273 (YLY) is the Small peptide recognition element. Short sequence motifs (small peptide recognition) lie at residues 319–322 (DLSE) and 341–343 (ELQ). N-linked (GlcNAc...) asparagine glycosylation occurs at N359. Short sequence motifs (small peptide recognition) lie at residues 389–393 (MFFAW) and 415–418 (DLSY). LRR repeat units follow at residues 408–432 (CQEL…IFEI), 434–456 (NLTK…IGNC), 457–480 (TNLY…IGNL), 481–504 (KNLN…ISGC), 506–526 (SLEF…GTLP), 527–550 (KSLQ…IGSL), 551–574 (TELT…ISSC), 576–598 (SLQL…LGRI), 600–622 (SLAI…RFSS), 623–646 (LTNL…LADL), and 647–670 (QNLV…LFFR). 2 N-linked (GlcNAc...) asparagine glycosylation sites follow: N420 and N434. The short motif at 437 to 441 (KLLLL) is the Small peptide recognition element. N455 is a glycosylation site (N-linked (GlcNAc...) asparagine). The short motif at 461 to 463 (RLR) is the Small peptide recognition element. The N-linked (GlcNAc...) asparagine glycan is linked to N606. A glycan (N-linked (GlcNAc...) asparagine) is linked at N653. The chain crosses the membrane as a helical span at residues 703-723 (VTMSILVAASVVLVLMAVYTL). Residues 724–1090 (VKAQRITGKQ…CSFAYSDESV (367 aa)) lie on the Cytoplasmic side of the membrane. Residues 758-1040 (LTSANVIGTG…KDIVAMLKEI (283 aa)) enclose the Protein kinase domain. Residues 764 to 772 (IGTGSSGVV) and K786 contribute to the ATP site. A phosphotyrosine mark is found at Y829 and Y869. D882 acts as the Proton acceptor in catalysis. Phosphotyrosine is present on Y932. The LRR 24 repeat unit spans residues 1037-1060 (LKEIRQFDMDRSESDMIKGGKCEK). The disordered stretch occupies residues 1054 to 1079 (KGGKCEKWQPQPLPPEKIVSTPRGSS).

This sequence belongs to the protein kinase superfamily. Ser/Thr protein kinase family. In terms of assembly, self-interacts. Interacts with RGF1; this interaction triggers its phosphorylation and ubiquitination and the formation of heterodimers with SERK1. Autophosphorylated. In terms of processing, phosphorylated and ubiquitinated upon interaction with RGF1, thus leading to activation a subsequent degradation. Expressed in floers, pollen grains and stipules. Present in roots.

The protein localises to the cell membrane. The enzyme catalyses L-seryl-[protein] + ATP = O-phospho-L-seryl-[protein] + ADP + H(+). It catalyses the reaction L-threonyl-[protein] + ATP = O-phospho-L-threonyl-[protein] + ADP + H(+). Functionally, receptor with a serine/threonine-protein kinase activity. Together with SKM1, LRR-rich receptor-like kinase (LRR-RLK) required for male fertility by the perception of CLE43 and CLE45 peptides and the transduction of their promoting action in pollen tubes, especially under relatively high temperature (at 30 degrees Celsius), thus conferring tolerance against high temperature probably through the maintenance of mitochondrial activity. Seems to not be involved in the perception of CLE45 peptide in roots. Together with RGI1, RGI2, RGI3, RGI4 and RGI5, acts as receptor of RGF1, a peptide hormone that maintains the postembryonic root stem cell niche by regulating the expression levels and patterns of the transcription factor PLETHORA (PLT). Links RGF1 signal with its downstream components. The sequence is that of Leucine-rich repeat receptor-like serine/threonine-protein kinase RGI4 from Arabidopsis thaliana (Mouse-ear cress).